A 307-amino-acid polypeptide reads, in one-letter code: Ribosomal RNA small subunit methyltransferase H (307 aa).

S-adenosyl-L-methionine contacts are provided by residues 32–34 (GGH), D52, F78, D99, and Q106.

This sequence belongs to the methyltransferase superfamily. RsmH family.

The protein resides in the cytoplasm. The catalysed reaction is cytidine(1402) in 16S rRNA + S-adenosyl-L-methionine = N(4)-methylcytidine(1402) in 16S rRNA + S-adenosyl-L-homocysteine + H(+). Its function is as follows. Specifically methylates the N4 position of cytidine in position 1402 (C1402) of 16S rRNA. This chain is Ribosomal RNA small subunit methyltransferase H, found in Acinetobacter baumannii (strain AB0057).